The primary structure comprises 241 residues: MKILLVFDFDNTIIDDNSDTWIVQCAPNKKLPIELRDSYRKGFWTEFMGRVFKYLGDKGVREHEMKRAVTSLPFTPGMVELFNFIRKNKDKFDCIIISDSNSVFIDWVLEAASFHDIFDKVFTNPAAFNSNGHLTVENYHTHSCNRCPKNLCKKVVLIEFVDKQLQQGVNYTQIVYIGDGGNDVCPVTFLKNDDVAMPRKGYTLQKTLSRMSQNLEPMEYSVVVWSSGVDIISHLQFLIKD.

Asp-8 acts as the Nucleophile in catalysis. 2 residues coordinate Mg(2+): Asp-8 and Asp-10. Asp-10 (proton donor) is an active-site residue. Positions 19 and 99 each coordinate substrate. Asp-179 is a Mg(2+) binding site.

Belongs to the HAD-like hydrolase superfamily. PHOSPHO family. The cofactor is Mg(2+).

It catalyses the reaction pyridoxal 5'-phosphate + H2O = pyridoxal + phosphate. Its function is as follows. Phosphatase that has high activity toward pyridoxal 5'-phosphate (PLP). Also active at much lower level toward pyrophosphate, phosphoethanolamine (PEA), phosphocholine (PCho), phospho-l-tyrosine, fructose-6-phosphate, p-nitrophenyl phosphate, and h-glycerophosphate. In Homo sapiens (Human), this protein is Pyridoxal phosphate phosphatase PHOSPHO2 (PHOSPHO2).